Consider the following 182-residue polypeptide: 7-carboxy-7-deazaguanine synthase (182 aa).

Residues 12 to 14 (LQG) and Arg-27 contribute to the substrate site. In terms of domain architecture, Radical SAM core spans 18 to 182 (HTGTPAVFIR…LQTHKLIDIR (165 aa)). Residues Cys-31, Cys-35, and Cys-38 each contribute to the [4Fe-4S] cluster site. Thr-40 serves as a coordination point for Mg(2+). Thr-68 is a substrate binding site. S-adenosyl-L-methionine contacts are provided by residues Gly-70 and 111–113 (SPK).

Belongs to the radical SAM superfamily. 7-carboxy-7-deazaguanine synthase family. As to quaternary structure, homodimer. [4Fe-4S] cluster serves as cofactor. It depends on S-adenosyl-L-methionine as a cofactor. The cofactor is Mg(2+).

The catalysed reaction is 6-carboxy-5,6,7,8-tetrahydropterin + H(+) = 7-carboxy-7-deazaguanine + NH4(+). It functions in the pathway purine metabolism; 7-cyano-7-deazaguanine biosynthesis. Its function is as follows. Catalyzes the complex heterocyclic radical-mediated conversion of 6-carboxy-5,6,7,8-tetrahydropterin (CPH4) to 7-carboxy-7-deazaguanine (CDG), a step common to the biosynthetic pathways of all 7-deazapurine-containing compounds. The chain is 7-carboxy-7-deazaguanine synthase from Bacteroides thetaiotaomicron (strain ATCC 29148 / DSM 2079 / JCM 5827 / CCUG 10774 / NCTC 10582 / VPI-5482 / E50).